The primary structure comprises 449 residues: Chromosomal replication initiator protein DnaA (449 aa).

The interval 1–73 (MDADLKNLWD…ANSIKAVCSK (73 aa)) is domain I, interacts with DnaA modulators. Positions 73–110 (KLYTIEFIIMSEIYEKEEIKSSSNQKSKAIVVNDEMSS) are domain II. The segment at 111 to 327 (TLNPKYTFNS…GALIRIIAYS (217 aa)) is domain III, AAA+ region. Residues Gly155, Gly157, Lys158, and Thr159 each coordinate ATP. A domain IV, binds dsDNA region spans residues 328-449 (SLTNREVTVD…NDITKKLTQN (122 aa)).

This sequence belongs to the DnaA family. Oligomerizes as a right-handed, spiral filament on DNA at oriC.

It localises to the cytoplasm. In terms of biological role, plays an essential role in the initiation and regulation of chromosomal replication. ATP-DnaA binds to the origin of replication (oriC) to initiate formation of the DNA replication initiation complex once per cell cycle. Binds the DnaA box (a 9 base pair repeat at the origin) and separates the double-stranded (ds)DNA. Forms a right-handed helical filament on oriC DNA; dsDNA binds to the exterior of the filament while single-stranded (ss)DNA is stabiized in the filament's interior. The ATP-DnaA-oriC complex binds and stabilizes one strand of the AT-rich DNA unwinding element (DUE), permitting loading of DNA polymerase. After initiation quickly degrades to an ADP-DnaA complex that is not apt for DNA replication. Binds acidic phospholipids. This chain is Chromosomal replication initiator protein DnaA, found in Clostridium beijerinckii (strain ATCC 51743 / NCIMB 8052) (Clostridium acetobutylicum).